The sequence spans 480 residues: Uronate isomerase (480 aa).

It belongs to the metallo-dependent hydrolases superfamily. Uronate isomerase family.

It catalyses the reaction D-glucuronate = D-fructuronate. The catalysed reaction is aldehydo-D-galacturonate = keto-D-tagaturonate. It participates in carbohydrate metabolism; pentose and glucuronate interconversion. This Phenylobacterium zucineum (strain HLK1) protein is Uronate isomerase.